We begin with the raw amino-acid sequence, 112 residues long: Mediator of RNA polymerase II transcription subunit 22 (112 aa).

The tract at residues 83–112 is disordered; sequence KPEDGGEGQLADELLDKIEDTSDGVDKETA. Over residues 96–112 the composition is skewed to basic and acidic residues; that stretch reads LLDKIEDTSDGVDKETA.

This sequence belongs to the Mediator complex subunit 22 family. As to quaternary structure, component of the Mediator complex.

Its subcellular location is the nucleus. Component of the Mediator complex, a coactivator involved in the regulated transcription of nearly all RNA polymerase II-dependent genes. Mediator functions as a bridge to convey information from gene-specific regulatory proteins to the basal RNA polymerase II transcription machinery. Mediator is recruited to promoters by direct interactions with regulatory proteins and serves as a scaffold for the assembly of a functional preinitiation complex with RNA polymerase II and the general transcription factors. The sequence is that of Mediator of RNA polymerase II transcription subunit 22 (SRB6) from Yarrowia lipolytica (strain CLIB 122 / E 150) (Yeast).